The sequence spans 147 residues: SsrA-binding protein (147 aa).

The protein belongs to the SmpB family.

Its subcellular location is the cytoplasm. Its function is as follows. Required for rescue of stalled ribosomes mediated by trans-translation. Binds to transfer-messenger RNA (tmRNA), required for stable association of tmRNA with ribosomes. tmRNA and SmpB together mimic tRNA shape, replacing the anticodon stem-loop with SmpB. tmRNA is encoded by the ssrA gene; the 2 termini fold to resemble tRNA(Ala) and it encodes a 'tag peptide', a short internal open reading frame. During trans-translation Ala-aminoacylated tmRNA acts like a tRNA, entering the A-site of stalled ribosomes, displacing the stalled mRNA. The ribosome then switches to translate the ORF on the tmRNA; the nascent peptide is terminated with the 'tag peptide' encoded by the tmRNA and targeted for degradation. The ribosome is freed to recommence translation, which seems to be the essential function of trans-translation. In Mycoplasmopsis fermentans (strain ATCC 19989 / NBRC 14854 / NCTC 10117 / PG18) (Mycoplasma fermentans), this protein is SsrA-binding protein.